A 146-amino-acid polypeptide reads, in one-letter code: Protein SprT-like (146 aa).

The 139-residue stretch at 4 to 142 folds into the SprT-like domain; the sequence is NEYVKQVSLE…GRCKGKLRLL (139 aa). Histidine 64 is a binding site for Zn(2+). The active site involves glutamate 65. Residue histidine 68 participates in Zn(2+) binding.

This sequence belongs to the SprT family. The cofactor is Zn(2+).

The protein resides in the cytoplasm. The sequence is that of Protein SprT-like from Streptococcus gordonii (strain Challis / ATCC 35105 / BCRC 15272 / CH1 / DL1 / V288).